Consider the following 78-residue polypeptide: UPF0335 protein A1E_00570 (78 aa).

The protein belongs to the UPF0335 family.

This chain is UPF0335 protein A1E_00570, found in Rickettsia canadensis (strain McKiel).